The following is a 150-amino-acid chain: Arginine repressor (150 aa).

It belongs to the ArgR family.

The protein localises to the cytoplasm. The protein operates within amino-acid biosynthesis; L-arginine biosynthesis [regulation]. Its function is as follows. Regulates arginine biosynthesis genes. The polypeptide is Arginine repressor (Staphylococcus saprophyticus subsp. saprophyticus (strain ATCC 15305 / DSM 20229 / NCIMB 8711 / NCTC 7292 / S-41)).